Here is a 118-residue protein sequence, read N- to C-terminus: MRANVLKRKLTLRIKRKKRIRAKISGCENFPRISVFKSNRTLYIQAIDDVKAVTLAAVDGRKLGVKANKEGAKKIAAEFAKTLKAKKIEQAVFDRNGYVYHGVIAVLAESLRENGIRL.

This sequence belongs to the universal ribosomal protein uL18 family. In terms of assembly, part of the 50S ribosomal subunit; part of the 5S rRNA/L5/L18/L25 subcomplex. Contacts the 5S and 23S rRNAs.

This is one of the proteins that bind and probably mediate the attachment of the 5S RNA into the large ribosomal subunit, where it forms part of the central protuberance. The sequence is that of Large ribosomal subunit protein uL18 from Campylobacter jejuni subsp. doylei (strain ATCC BAA-1458 / RM4099 / 269.97).